The sequence spans 128 residues: Small ribosomal subunit protein eS6 (128 aa).

Belongs to the eukaryotic ribosomal protein eS6 family.

The protein is Small ribosomal subunit protein eS6 of Methanobrevibacter smithii (strain ATCC 35061 / DSM 861 / OCM 144 / PS).